Consider the following 72-residue polypeptide: Caerin-regulated peptide (72 aa).

Positions 1-22 (MAFLKKSLLLVLFLGLVSLSIC) are cleaved as a signal peptide. The propeptide occupies 23–43 (DEEKRENEDEEEQEDDEQSEE). The disordered stretch occupies residues 24–46 (EEKRENEDEEEQEDDEQSEEKRG). Acidic residues predominate over residues 30–41 (EDEEEQEDDEQS).

In terms of tissue distribution, expressed by the skin glands.

Its subcellular location is the secreted. Has antibacterial activity against Gram-positive bacterium M.luteus NCT C2665 and against Gram-negative bacterium E.coli K12D31. The protein is Caerin-regulated peptide of Agalychnis callidryas (Red-eyed tree frog).